The sequence spans 142 residues: Large ribosomal subunit protein uL11 (142 aa).

It belongs to the universal ribosomal protein uL11 family. In terms of assembly, part of the ribosomal stalk of the 50S ribosomal subunit. Interacts with L10 and the large rRNA to form the base of the stalk. L10 forms an elongated spine to which L12 dimers bind in a sequential fashion forming a multimeric L10(L12)X complex. One or more lysine residues are methylated.

Functionally, forms part of the ribosomal stalk which helps the ribosome interact with GTP-bound translation factors. The polypeptide is Large ribosomal subunit protein uL11 (Bradyrhizobium sp. (strain BTAi1 / ATCC BAA-1182)).